The following is a 215-amino-acid chain: Probable phosphoglycerate mutase GpmB (215 aa).

Residues 8-15 (RHGESEWN), 21-22 (QG), arginine 58, arginine 60, 82-85 (ELHM), and 151-152 (GI) contribute to the substrate site. Catalysis depends on histidine 9, which acts as the Tele-phosphohistidine intermediate. Glutamate 82 (proton donor/acceptor) is an active-site residue.

Belongs to the phosphoglycerate mutase family. GpmB subfamily.

It carries out the reaction (2R)-2-phosphoglycerate = (2R)-3-phosphoglycerate. It functions in the pathway carbohydrate degradation; glycolysis; pyruvate from D-glyceraldehyde 3-phosphate: step 3/5. This Photorhabdus laumondii subsp. laumondii (strain DSM 15139 / CIP 105565 / TT01) (Photorhabdus luminescens subsp. laumondii) protein is Probable phosphoglycerate mutase GpmB.